Reading from the N-terminus, the 734-residue chain is MALRIPRFSQGIAQDPTTRRIWFGIATAHDFESHDDITEGRLYQNIFASHFGQLAIIFLWTSGNLFHVAWQGNFEAWVQDPFHVRPIAHAIWDPHFGQPAVEAFTRGGALGPVNNAYSGVYQWWYTIGLRTNEDLYTGAIFLLFLSFISLLAGWLHLQPKWKPSVSWFKNAESRLNHHLSGLFGVSSLAWAGHLVHVAIPGSRGEYVRWNNFLDVLPYPQGLGPLLTGQWNLYAQNPSSSNHLFGTTQGAGTAILTILGGFHPQTQSLWLTDVAHHHLAIAFLFLIGGLMYRTNFGIGHSIKYILEAHIPPGGRLGRGHKGLYDTINNSIHFQLGLALASLGVITSLVAQHMYSLPAYAFIAQDFTTQAALYTHHQYIAGFIMTGAFAHGPIFFIRDYNPEQNADNVLARMLEHKEAIISHLSWASLFLGFHTLGLYVHNDVMLAFGTPEKQILIEPIFAQWIQSAHGKTTYGFDIPLSSTNGPALNAGRNIWLPGWLNAINENSNSLFLTIGPGDFLVHHAIALGLHTTTLILVKGALDARGSKLMPDKKDFGYSFPCDGPGRGGTCDISAWDDFYLAVFWMLNTIGWVTFYWHWKHITLWRGNVSQFNESSTYLMGWLRDYLWLNSSQLINGITPLVCNSLSVWAWMFLFGHLVWATGFMFLISWRGYWQELIETLAWAHERTPLANLIRWRDKPVALSIVQARLVGLVHFSVGYIFTYAAFLIASTSGKFG.

8 helical membrane passes run 46–69, 135–158, 175–199, 273–291, 330–353, 369–395, 417–439, and 517–535; these read IFASHFGQLAIIFLWTSGNLFHVA, LYTGAIFLLFLSFISLLAGWLHLQ, LNHHLSGLFGVSSLAWAGHLVHVAI, VAHHHLAIAFLFLIGGLMY, IHFQLGLALASLGVITSLVAQHMY, AALYTHHQYIAGFIMTGAFAHGPIFFI, AIISHLSWASLFLGFHTLGLYVH, and FLVHHAIALGLHTTTLILV. [4Fe-4S] cluster contacts are provided by Cys559 and Cys568. The next 2 helical transmembrane spans lie at 575–596 and 643–665; these read DFYLAVFWMLNTIGWVTFYWHW and LSVWAWMFLFGHLVWATGFMFLI. Chlorophyll a-binding residues include His654, Met662, and Tyr670. Trp671 is a phylloquinone binding site. Residues 707 to 727 form a helical membrane-spanning segment; the sequence is LVGLVHFSVGYIFTYAAFLIA.

This sequence belongs to the PsaA/PsaB family. As to quaternary structure, the PsaA/B heterodimer binds the P700 chlorophyll special pair and subsequent electron acceptors. PSI consists of a core antenna complex that captures photons, and an electron transfer chain that converts photonic excitation into a charge separation. The eukaryotic PSI reaction center is composed of at least 11 subunits. Requires P700 is a chlorophyll a/chlorophyll a' dimer, A0 is one or more chlorophyll a, A1 is one or both phylloquinones and FX is a shared 4Fe-4S iron-sulfur center. as cofactor.

The protein resides in the plastid. The protein localises to the chloroplast thylakoid membrane. It catalyses the reaction reduced [plastocyanin] + hnu + oxidized [2Fe-2S]-[ferredoxin] = oxidized [plastocyanin] + reduced [2Fe-2S]-[ferredoxin]. Its function is as follows. PsaA and PsaB bind P700, the primary electron donor of photosystem I (PSI), as well as the electron acceptors A0, A1 and FX. PSI is a plastocyanin-ferredoxin oxidoreductase, converting photonic excitation into a charge separation, which transfers an electron from the donor P700 chlorophyll pair to the spectroscopically characterized acceptors A0, A1, FX, FA and FB in turn. Oxidized P700 is reduced on the lumenal side of the thylakoid membrane by plastocyanin. This chain is Photosystem I P700 chlorophyll a apoprotein A2, found in Pisum sativum (Garden pea).